The primary structure comprises 320 residues: ATP-dependent 6-phosphofructokinase (320 aa).

An ATP-binding site is contributed by Gly12. ADP is bound by residues 22 to 26 (RGVVR) and 55 to 60 (RYSVSD). ATP is bound by residues 73-74 (RF) and 103-106 (GDGS). Residue Asp104 participates in Mg(2+) binding. 126 to 128 (TID) is a binding site for substrate. Catalysis depends on Asp128, which acts as the Proton acceptor. Arg155 serves as a coordination point for ADP. Substrate contacts are provided by residues Arg163 and 170–172 (MGR). ADP contacts are provided by residues 186–188 (GCE), Lys212, and 214–216 (KKH). Substrate contacts are provided by residues Glu223, Arg244, and 250 to 253 (HIQR).

The protein belongs to the phosphofructokinase type A (PFKA) family. ATP-dependent PFK group I subfamily. Prokaryotic clade 'B1' sub-subfamily. In terms of assembly, homotetramer. Requires Mg(2+) as cofactor.

It is found in the cytoplasm. It carries out the reaction beta-D-fructose 6-phosphate + ATP = beta-D-fructose 1,6-bisphosphate + ADP + H(+). It participates in carbohydrate degradation; glycolysis; D-glyceraldehyde 3-phosphate and glycerone phosphate from D-glucose: step 3/4. With respect to regulation, allosterically activated by ADP and other diphosphonucleosides, and allosterically inhibited by phosphoenolpyruvate. In terms of biological role, catalyzes the phosphorylation of D-fructose 6-phosphate to fructose 1,6-bisphosphate by ATP, the first committing step of glycolysis. In Erwinia tasmaniensis (strain DSM 17950 / CFBP 7177 / CIP 109463 / NCPPB 4357 / Et1/99), this protein is ATP-dependent 6-phosphofructokinase.